The chain runs to 304 residues: tRNA dimethylallyltransferase (304 aa).

An ATP-binding site is contributed by 2-9; that stretch reads GPTASGKT. A substrate-binding site is contributed by 4–9; it reads TASGKT. Interaction with substrate tRNA regions lie at residues 27–30, 151–155, 232–237, and 265–272; these read DSAL, QRINR, RCVGYR, and KRQITWLR.

Belongs to the IPP transferase family. In terms of assembly, monomer. It depends on Mg(2+) as a cofactor.

It catalyses the reaction adenosine(37) in tRNA + dimethylallyl diphosphate = N(6)-dimethylallyladenosine(37) in tRNA + diphosphate. In terms of biological role, catalyzes the transfer of a dimethylallyl group onto the adenine at position 37 in tRNAs that read codons beginning with uridine, leading to the formation of N6-(dimethylallyl)adenosine (i(6)A). The chain is tRNA dimethylallyltransferase from Actinobacillus pleuropneumoniae serotype 7 (strain AP76).